A 247-amino-acid polypeptide reads, in one-letter code: Sugar fermentation stimulation protein homolog (247 aa).

Belongs to the SfsA family.

The polypeptide is Sugar fermentation stimulation protein homolog (Methanococcoides burtonii (strain DSM 6242 / NBRC 107633 / OCM 468 / ACE-M)).